A 478-amino-acid chain; its full sequence is Sodium-coupled neutral amino acid transporter 5 (478 aa).

Residues 1 to 20 (MAISSAEGMELQDPKMNGAL) are disordered. The Cytoplasmic portion of the chain corresponds to 1 to 57 (MAISSAEGMELQDPKMNGALPGNAVEQEHEGFLPSHSPSPGRKPAQFMDFEGKTSFG). The chain crosses the membrane as a helical span at residues 58 to 80 (MSVFNLSNAIMGSGILGLAYAMA). Residues 81 to 93 (HTGILLFLALLLC) are Extracellular-facing. The chain crosses the membrane as a helical span at residues 94–114 (IALLSSYSIHLLLTCAGVVGI). The Cytoplasmic segment spans residues 115-131 (RAYEQLGQRALGPAGKV). Residues 132 to 152 (VVAAVICLHNVGAMSSYLFII) traverse the membrane as a helical segment. Topologically, residues 153 to 172 (KSELPLVIATFLDMDPEGDW) are extracellular. The chain crosses the membrane as a helical span at residues 173–193 (FLKGNLLIIIVSVLIILPLAL). Residues 194–198 (MRHLG) lie on the Cytoplasmic side of the membrane. The helical transmembrane segment at 199–219 (YLGYTSGLSLTCMLFFLISVI) threads the bilayer. Over 220-263 (YKKFQLGCTVGHNGTAVESKSSPSLPIHGLNTSCEAQMFTADSQ) the chain is Extracellular. An intrachain disulfide couples cysteine 227 to cysteine 253. N-linked (GlcNAc...) asparagine glycosylation is present at asparagine 232. The chain crosses the membrane as a helical span at residues 264 to 284 (MFYTVPIMAFAFVCHPEVLPI). Over 285–301 (YTELCRPSKRRMQAVAN) the chain is Cytoplasmic. The chain crosses the membrane as a helical span at residues 302 to 322 (VSIGAMFCMYGLTATFGYLTF). Residues 323–340 (YSSVEAEMLHMYSQHDLL) are Extracellular-facing. The chain crosses the membrane as a helical span at residues 341 to 361 (ILCVRLAVLLAVTLTVPVVLF). Residues 362–382 (PIRRALQQLLFPSKAFSWPRH) lie on the Cytoplasmic side of the membrane. The chain crosses the membrane as a helical span at residues 383 to 403 (VAIALILLVLVNVLVICVPTI). At 404 to 405 (RD) the chain is on the extracellular side. A helical transmembrane segment spans residues 406–426 (IFGVIGSTSAPSLIFILPSIF). Residues 427–445 (YLRIVPSEVEPLYSWPKIQ) lie on the Cytoplasmic side of the membrane. Residues 446 to 466 (ALCFGVLGVLFMAISLGFMFA) form a helical membrane-spanning segment. Residues 467 to 478 (NWATGQSHVSGH) lie on the Extracellular side of the membrane.

It belongs to the amino acid/polyamine transporter 2 family.

The protein resides in the cell membrane. It catalyses the reaction L-serine(out) + Na(+)(out) + H(+)(in) = L-serine(in) + Na(+)(in) + H(+)(out). The enzyme catalyses L-alanine(out) + Na(+)(out) + H(+)(in) = L-alanine(in) + Na(+)(in) + H(+)(out). It carries out the reaction glycine(out) + Na(+)(out) + H(+)(in) = glycine(in) + Na(+)(in) + H(+)(out). The catalysed reaction is L-glutamine(out) + Na(+)(out) + H(+)(in) = L-glutamine(in) + Na(+)(in) + H(+)(out). It catalyses the reaction L-asparagine(out) + Na(+)(out) + H(+)(in) = L-asparagine(in) + Na(+)(in) + H(+)(out). The enzyme catalyses L-histidine(out) + Na(+)(out) + H(+)(in) = L-histidine(in) + Na(+)(in) + H(+)(out). It carries out the reaction L-cysteine(out) + Na(+)(out) + H(+)(in) = L-cysteine(in) + Na(+)(in) + H(+)(out). Its activity is regulated as follows. Not inhibited by lithium. Partial allosteric regulation on ions sodium binding. Functionally, symporter that cotransports neutral amino acids and sodium ions, coupled to an H(+) antiporter activity. Releases L-glutamine and glycine from astroglial cells and may participate in the glutamate/GABA-glutamine cycle and the NMDA receptors activation. In addition contributes significantly to L-glutamine uptake in retina, namely in ganglion and Mueller cells and, therefore participates in the retinal glutamate-glutamine cycle. The transport activity is pH sensitive, Li(+) tolerant, bidirectional and associated with large uncoupled fluxes of protons. The transport is electroneutral coupled to the cotransport of 1 Na(+) and the antiport of 1 H(+). May have particular importance for modulation of net hepatic glutamine flux. The sequence is that of Sodium-coupled neutral amino acid transporter 5 from Bos taurus (Bovine).